The chain runs to 360 residues: MQKFILLALSLALVLAITESFDFHEKELESEESLWGLYERWRSHHTVSRSLHEKQKRFNVFKHNAMHVHNANKMDKPYKLKLNKFADMTNHEFRNTYSGSKVKHHRMFRGGPRGNGTFMYEKVDTVPASVDWRKKGAVTSVKDQGQCGSCWAFSTIVAVEGINQIKTNKLVSLSEQELVDCDTDQNQGCNGGLMDYAFEFIKQRGGITTEANYPYEAYDGTCDVSKENAPAVSIDGHENVPENDENALLKAVANQPVSVAIDAGGSDFQFYSEGVFTGSCGTELDHGVAIVGYGTTIDGTKYWTVKNSWGPEWGEKGYIRMERGISDKEGLCGIAMEASYPIKKSSNNPSGIKSSPKDEL.

A signal peptide spans 1-20 (MQKFILLALSLALVLAITES). The propeptide at 21-124 (FDFHEKELES…NGTFMYEKVD (104 aa)) is activation peptide. Asn115 is a glycosylation site (N-linked (GlcNAc...) asparagine). Cystine bridges form between Cys147-Cys189, Cys181-Cys222, and Cys280-Cys332. Cys150 is an active-site residue. Catalysis depends on residues His286 and Asn307. Positions 341 to 360 (PIKKSSNNPSGIKSSPKDEL) are disordered. Residues 344–353 (KSSNNPSGIK) show a composition bias toward polar residues. Residues 354-360 (SSPKDEL) constitute a propeptide, removed in mature form. The segment at 357 to 360 (KDEL) is prevents secretion from ER.

The protein belongs to the peptidase C1 family. In terms of processing, the potential N-glycosylation site at Asn-115 is not glycosylated.

It localises to the cytoplasmic vesicle. With respect to regulation, low pH triggers activation of the protease and removal of the propeptide and the KDEL motif. Involved in programmed cell death. Shows a pronounced preference for hydrophobic residues in the P2 position and no obvious preference in the P1 position of the cleavage site. Accepts proline at the P1 and P1' positions. In Ricinus communis (Castor bean), this protein is Vignain (CYSEP).